Reading from the N-terminus, the 549-residue chain is Cation/acetate symporter ActP (549 aa).

A run of 13 helical transmembrane segments spans residues 33 to 53 (WQAIIMFLIFVVFTLGITYWA), 77 to 97 (LAIAGDYMSAASFLGISALVF), 103 to 123 (GLIYSLGFLVGWPIILFLIAE), 148 to 168 (ILSACGSLVVVALYLIAQMVG), 183 to 203 (IAVVLVGVLMMMYVLFGGMLA), 206 to 226 (WVQIIKAVLLLFGASFMAFMV), 262 to 282 (ISALSLGLGLMFGTAGLPHIL), 303 to 323 (GFMGYFYILTFIIGFGAIMLV), 355 to 375 (LFLGFISAVAFATILAVVAGL), 404 to 424 (VSKITVLILGVIAIILGMLFE), 428 to 448 (IAFMVGLAFAIAASCNFPIIL), 464 to 484 (GGWLGLITAVVLMILGPTIWV), and 493 to 513 (IFPYEYPALFSISVAFLGIWF).

The protein belongs to the sodium:solute symporter (SSF) (TC 2.A.21) family.

Its subcellular location is the cell inner membrane. Functionally, transports acetate. This chain is Cation/acetate symporter ActP, found in Shigella boydii serotype 4 (strain Sb227).